We begin with the raw amino-acid sequence, 430 residues long: Dihydroorotase (430 aa).

His-61 and His-63 together coordinate Zn(2+). Substrate-binding positions include 63 to 65 (HLR) and Asn-95. 3 residues coordinate Zn(2+): Asp-153, His-180, and His-233. Residue Asn-279 coordinates substrate. Asp-306 lines the Zn(2+) pocket. Residue Asp-306 is part of the active site. Residue His-310 coordinates substrate.

The protein belongs to the metallo-dependent hydrolases superfamily. DHOase family. Class I DHOase subfamily. Requires Zn(2+) as cofactor.

The catalysed reaction is (S)-dihydroorotate + H2O = N-carbamoyl-L-aspartate + H(+). The protein operates within pyrimidine metabolism; UMP biosynthesis via de novo pathway; (S)-dihydroorotate from bicarbonate: step 3/3. In terms of biological role, catalyzes the reversible cyclization of carbamoyl aspartate to dihydroorotate. The protein is Dihydroorotase of Caldicellulosiruptor saccharolyticus (strain ATCC 43494 / DSM 8903 / Tp8T 6331).